Consider the following 86-residue polypeptide: UPF0457 protein SERP1772 (86 aa).

This sequence belongs to the UPF0457 family.

The chain is UPF0457 protein SERP1772 from Staphylococcus epidermidis (strain ATCC 35984 / DSM 28319 / BCRC 17069 / CCUG 31568 / BM 3577 / RP62A).